Consider the following 240-residue polypeptide: Large ribosomal subunit protein uL2 (240 aa).

Polar residues predominate over residues 1–11 (MGKRLISQNRG). Disordered stretches follow at residues 1 to 26 (MGKR…KRKG) and 206 to 240 (GGGR…TGRK). Composition is skewed to basic residues over residues 13-26 (GTPK…KRKG) and 228-240 (KVGH…TGRK).

This sequence belongs to the universal ribosomal protein uL2 family. As to quaternary structure, part of the 50S ribosomal subunit. Forms a bridge to the 30S subunit in the 70S ribosome.

Functionally, one of the primary rRNA binding proteins. Required for association of the 30S and 50S subunits to form the 70S ribosome, for tRNA binding and peptide bond formation. It has been suggested to have peptidyltransferase activity; this is somewhat controversial. Makes several contacts with the 16S rRNA in the 70S ribosome. The protein is Large ribosomal subunit protein uL2 of Methanococcus vannielii (strain ATCC 35089 / DSM 1224 / JCM 13029 / OCM 148 / SB).